A 316-amino-acid chain; its full sequence is Transaldolase (316 aa).

The Schiff-base intermediate with substrate role is filled by K132.

This sequence belongs to the transaldolase family. Type 1 subfamily. Homodimer.

It is found in the cytoplasm. The catalysed reaction is D-sedoheptulose 7-phosphate + D-glyceraldehyde 3-phosphate = D-erythrose 4-phosphate + beta-D-fructose 6-phosphate. The protein operates within carbohydrate degradation; pentose phosphate pathway; D-glyceraldehyde 3-phosphate and beta-D-fructose 6-phosphate from D-ribose 5-phosphate and D-xylulose 5-phosphate (non-oxidative stage): step 2/3. Its function is as follows. Transaldolase is important for the balance of metabolites in the pentose-phosphate pathway. This Aeromonas salmonicida (strain A449) protein is Transaldolase.